The following is a 345-amino-acid chain: Tropomodulin-4 (345 aa).

Disordered regions lie at residues 40 to 64 (PENMLLPAGLRQRDQTKKSPTGPLD) and 326 to 345 (ARAAHAMTRNNELRRQQKKR). Residues 336 to 345 (NELRRQQKKR) are compositionally biased toward basic and acidic residues.

The protein belongs to the tropomodulin family. As to quaternary structure, binds to the N-terminus of tropomyosin and to actin.

It localises to the cytoplasm. Its subcellular location is the cytoskeleton. In terms of biological role, blocks the elongation and depolymerization of the actin filaments at the pointed end. The Tmod/TM complex contributes to the formation of the short actin protofilament, which in turn defines the geometry of the membrane skeleton. This is Tropomodulin-4 (Tmod4) from Mus musculus (Mouse).